The chain runs to 496 residues: Aspartyl/glutamyl-tRNA(Asn/Gln) amidotransferase subunit B (496 aa).

This sequence belongs to the GatB/GatE family. GatB subfamily. In terms of assembly, heterotrimer of A, B and C subunits.

It catalyses the reaction L-glutamyl-tRNA(Gln) + L-glutamine + ATP + H2O = L-glutaminyl-tRNA(Gln) + L-glutamate + ADP + phosphate + H(+). The enzyme catalyses L-aspartyl-tRNA(Asn) + L-glutamine + ATP + H2O = L-asparaginyl-tRNA(Asn) + L-glutamate + ADP + phosphate + 2 H(+). Allows the formation of correctly charged Asn-tRNA(Asn) or Gln-tRNA(Gln) through the transamidation of misacylated Asp-tRNA(Asn) or Glu-tRNA(Gln) in organisms which lack either or both of asparaginyl-tRNA or glutaminyl-tRNA synthetases. The reaction takes place in the presence of glutamine and ATP through an activated phospho-Asp-tRNA(Asn) or phospho-Glu-tRNA(Gln). The sequence is that of Aspartyl/glutamyl-tRNA(Asn/Gln) amidotransferase subunit B from Prochlorococcus marinus (strain MIT 9303).